A 679-amino-acid chain; its full sequence is MAEQQQRAAELRSLLNRAAHAYYVLDAPVMEDTLYDRLYRELQQLEQADPSLLSADSPTQRVGKAPATGFHSVEHRIPLQSLDNAFDHGELKAWHERLLKVLDRADDSPLPLVGELKIDGNALALSYRHGVLERAATRGDGSSGEEITANVRTISSIPLRLQIDDPPEWVEVRGEAFIPDDTFAAINNERAAHGDALFANPRNACAGTLRQLDPKVVAARRLDFFAYTLHLPSDHSNSPECQWDVLAWLEQAGFRVNPNRELCDGLNGIERFCDRWEQQRHQLTYATDGVVVKLNDLRLQDEAGTTQKAPRWAIALKYPAEEAPSKLLKLAVQVGRTGAVTPVAEFEPVALAGTSVSRATLHNADRIAELDLHLGDTVVVRKAGEIIPEVVRVLPELRPTGAVPLELPDHCPECGSNLVRDDSEAATRCINSSCPAILRGGLRHWVSKGALDVDGLGNKLIQQLVERGLVRSIADLYRLDAALLASLERVGEKSAANLVAALEQSKQQPWHRQLYGLGIRHIGEVNAKALAAAYPNSASLAAAEPESIAALHGIGPEISSSLQQWHANPPNQRLLEDLRAVGLSLEANTSELNANSTGEGNSSGALLGKTLVLTGTLPNLSRSDAKTLIEGAGGKVSGSVSKKTDYLVAGEAAGSKLSKAESLGVEILTEAELQKLLST.

NAD(+)-binding positions include 32–36, 81–82, and Glu115; these read DTLYD and SL. The active-site N6-AMP-lysine intermediate is the Lys117. Residues Arg138, Glu175, Lys293, and Lys317 each contribute to the NAD(+) site. Zn(2+)-binding residues include Cys411, Cys414, Cys429, and Cys434. Positions 601–679 constitute a BRCT domain; that stretch reads NSSGALLGKT…EAELQKLLST (79 aa).

Belongs to the NAD-dependent DNA ligase family. LigA subfamily. It depends on Mg(2+) as a cofactor. The cofactor is Mn(2+).

It carries out the reaction NAD(+) + (deoxyribonucleotide)n-3'-hydroxyl + 5'-phospho-(deoxyribonucleotide)m = (deoxyribonucleotide)n+m + AMP + beta-nicotinamide D-nucleotide.. DNA ligase that catalyzes the formation of phosphodiester linkages between 5'-phosphoryl and 3'-hydroxyl groups in double-stranded DNA using NAD as a coenzyme and as the energy source for the reaction. It is essential for DNA replication and repair of damaged DNA. This chain is DNA ligase, found in Parasynechococcus marenigrum (strain WH8102).